The chain runs to 407 residues: Protein NIS1 (407 aa).

Positions 41 to 61 (SNSNSNSNTNSNTNSNTNSNS) are enriched in low complexity. The tract at residues 41-64 (SNSNSNSNTNSNTNSNTNSNSDTK) is disordered. Phosphoserine occurs at positions 260, 264, 300, and 302. Positions 277–302 (IKQNSTTPTTRSVYNKNVGRSNTSPS) are enriched in polar residues. The disordered stretch occupies residues 277–315 (IKQNSTTPTTRSVYNKNVGRSNTSPSVLYHPKRRGKLNT). Over residues 306–315 (HPKRRGKLNT) the composition is skewed to basic residues. The SUMO-binding signature appears at 391-398 (IIIPDSQD).

As to quaternary structure, interacts with CBF2, GIS1, NAP1, PRM8, REI1, SHS1 and SMT3.

The protein resides in the bud neck. It localises to the cytoplasm. Its subcellular location is the cell cortex. Functionally, may be involved in a mitotic signaling network. Binds sumoylated proteins and may stabilize SUMO chains. The sequence is that of Protein NIS1 (NIS1) from Saccharomyces cerevisiae (strain ATCC 204508 / S288c) (Baker's yeast).